Here is a 63-residue protein sequence, read N- to C-terminus: Protein D-63 (63 aa).

In terms of assembly, homodimer.

Its function is as follows. This protein may be involved in virus assembly. This Saccharolobus solfataricus (Sulfolobus solfataricus) protein is Protein D-63.